The primary structure comprises 306 residues: Glutaminase (306 aa).

Residues Ser66, Asn116, Glu159, Asn166, Tyr190, Tyr242, and Val260 each contribute to the substrate site.

This sequence belongs to the glutaminase family. In terms of assembly, homotetramer.

It carries out the reaction L-glutamine + H2O = L-glutamate + NH4(+). This chain is Glutaminase, found in Caulobacter vibrioides (strain ATCC 19089 / CIP 103742 / CB 15) (Caulobacter crescentus).